Reading from the N-terminus, the 425-residue chain is Elongation factor 1-alpha (425 aa).

Positions Lys5–Thr221 constitute a tr-type G domain. Positions Gly14–Ser21 are G1. Position 14–21 (Gly14–Ser21) interacts with GTP. A Mg(2+)-binding site is contributed by Ser21. Positions Gly70–Asp74 are G2. The G3 stretch occupies residues Asp91 to Gly94. Residues Asp91–His95 and Asn146–Asp149 contribute to the GTP site. The tract at residues Asn146–Asp149 is G4. The segment at Ser185–Leu187 is G5.

It belongs to the TRAFAC class translation factor GTPase superfamily. Classic translation factor GTPase family. EF-Tu/EF-1A subfamily.

The protein resides in the cytoplasm. The enzyme catalyses GTP + H2O = GDP + phosphate + H(+). Its function is as follows. GTP hydrolase that promotes the GTP-dependent binding of aminoacyl-tRNA to the A-site of ribosomes during protein biosynthesis. The sequence is that of Elongation factor 1-alpha from Methanoregula boonei (strain DSM 21154 / JCM 14090 / 6A8).